Consider the following 51-residue polypeptide: Large ribosomal subunit protein bL33 (51 aa).

It belongs to the bacterial ribosomal protein bL33 family.

This is Large ribosomal subunit protein bL33 from Acinetobacter baylyi (strain ATCC 33305 / BD413 / ADP1).